A 376-amino-acid polypeptide reads, in one-letter code: Chaperone protein DnaJ (376 aa).

Residues Asp-5–Gly-72 enclose the J domain. The CR-type zinc-finger motif lies at Gly-136–Gln-214. Zn(2+) is bound by residues Cys-149, Cys-152, Cys-166, Cys-169, Cys-188, Cys-191, Cys-202, and Cys-205. 4 CXXCXGXG motif repeats span residues Cys-149 to Gly-156, Cys-166 to Gly-173, Cys-188 to Gly-195, and Cys-202 to Gly-209. 2 disordered regions span residues Asp-227 to Pro-246 and Ser-352 to Ser-376. Over residues Gly-237–Pro-246 the composition is skewed to gly residues. Basic and acidic residues predominate over residues Trp-367–Ser-376.

This sequence belongs to the DnaJ family. Homodimer. Zn(2+) serves as cofactor.

The protein resides in the cytoplasm. Functionally, participates actively in the response to hyperosmotic and heat shock by preventing the aggregation of stress-denatured proteins and by disaggregating proteins, also in an autonomous, DnaK-independent fashion. Unfolded proteins bind initially to DnaJ; upon interaction with the DnaJ-bound protein, DnaK hydrolyzes its bound ATP, resulting in the formation of a stable complex. GrpE releases ADP from DnaK; ATP binding to DnaK triggers the release of the substrate protein, thus completing the reaction cycle. Several rounds of ATP-dependent interactions between DnaJ, DnaK and GrpE are required for fully efficient folding. Also involved, together with DnaK and GrpE, in the DNA replication of plasmids through activation of initiation proteins. This is Chaperone protein DnaJ from Acidovorax sp. (strain JS42).